Consider the following 101-residue polypeptide: Ribonuclease kappa-B (101 aa).

A run of 2 helical transmembrane segments spans residues 13–33 and 68–88; these read ACGI…GVFF and VSYN…FSFC.

The protein belongs to the RNase K family.

It is found in the membrane. Functionally, endoribonuclease which preferentially cleaves ApU and ApG phosphodiester bonds. The chain is Ribonuclease kappa-B (rnasek-b) from Xenopus laevis (African clawed frog).